Here is a 256-residue protein sequence, read N- to C-terminus: DNA repair protein RecO (256 aa).

The protein belongs to the RecO family.

Functionally, involved in DNA repair and RecF pathway recombination. The polypeptide is DNA repair protein RecO (Delftia acidovorans (strain DSM 14801 / SPH-1)).